The primary structure comprises 156 residues: ATP synthase subunit b (156 aa).

The helical transmembrane segment at 11–31 (AIAFVLFVLFCMKYIWPPIMA) threads the bilayer.

The protein belongs to the ATPase B chain family. As to quaternary structure, F-type ATPases have 2 components, F(1) - the catalytic core - and F(0) - the membrane proton channel. F(1) has five subunits: alpha(3), beta(3), gamma(1), delta(1), epsilon(1). F(0) has three main subunits: a(1), b(2) and c(10-14). The alpha and beta chains form an alternating ring which encloses part of the gamma chain. F(1) is attached to F(0) by a central stalk formed by the gamma and epsilon chains, while a peripheral stalk is formed by the delta and b chains.

It is found in the cell inner membrane. F(1)F(0) ATP synthase produces ATP from ADP in the presence of a proton or sodium gradient. F-type ATPases consist of two structural domains, F(1) containing the extramembraneous catalytic core and F(0) containing the membrane proton channel, linked together by a central stalk and a peripheral stalk. During catalysis, ATP synthesis in the catalytic domain of F(1) is coupled via a rotary mechanism of the central stalk subunits to proton translocation. Functionally, component of the F(0) channel, it forms part of the peripheral stalk, linking F(1) to F(0). The polypeptide is ATP synthase subunit b (Yersinia enterocolitica serotype O:8 / biotype 1B (strain NCTC 13174 / 8081)).